Reading from the N-terminus, the 264-residue chain is 3-methyl-2-oxobutanoate hydroxymethyltransferase (264 aa).

D45 and D84 together coordinate Mg(2+). 3-methyl-2-oxobutanoate is bound by residues 45–46 (DS), D84, and K112. A Mg(2+)-binding site is contributed by E114. The Proton acceptor role is filled by E181.

This sequence belongs to the PanB family. Homodecamer; pentamer of dimers. The cofactor is Mg(2+).

The protein resides in the cytoplasm. The enzyme catalyses 3-methyl-2-oxobutanoate + (6R)-5,10-methylene-5,6,7,8-tetrahydrofolate + H2O = 2-dehydropantoate + (6S)-5,6,7,8-tetrahydrofolate. The protein operates within cofactor biosynthesis; (R)-pantothenate biosynthesis; (R)-pantoate from 3-methyl-2-oxobutanoate: step 1/2. Its function is as follows. Catalyzes the reversible reaction in which hydroxymethyl group from 5,10-methylenetetrahydrofolate is transferred onto alpha-ketoisovalerate to form ketopantoate. This Shigella sonnei (strain Ss046) protein is 3-methyl-2-oxobutanoate hydroxymethyltransferase.